A 128-amino-acid polypeptide reads, in one-letter code: Ribonuclease P protein component (128 aa).

The protein belongs to the RnpA family. Consists of a catalytic RNA component (M1 or rnpB) and a protein subunit.

The enzyme catalyses Endonucleolytic cleavage of RNA, removing 5'-extranucleotides from tRNA precursor.. RNaseP catalyzes the removal of the 5'-leader sequence from pre-tRNA to produce the mature 5'-terminus. It can also cleave other RNA substrates such as 4.5S RNA. The protein component plays an auxiliary but essential role in vivo by binding to the 5'-leader sequence and broadening the substrate specificity of the ribozyme. In Prochlorococcus marinus (strain MIT 9215), this protein is Ribonuclease P protein component.